The following is a 218-amino-acid chain: Riboflavin synthase (218 aa).

Lumazine-binding repeat units follow at residues 1–97 (MFTG…FGGH) and 98–194 (IVSG…ERLL). 2,4-dihydroxypteridine contacts are provided by residues 4–6 (GII), 48–50 (CLT), 62–67 (DLSIET), 101–103 (GHV), Lys-136, 145–147 (SLT), and 159–164 (TIVPHT).

As to quaternary structure, homotrimer.

It carries out the reaction 2 6,7-dimethyl-8-(1-D-ribityl)lumazine + H(+) = 5-amino-6-(D-ribitylamino)uracil + riboflavin. The protein operates within cofactor biosynthesis; riboflavin biosynthesis; riboflavin from 2-hydroxy-3-oxobutyl phosphate and 5-amino-6-(D-ribitylamino)uracil: step 2/2. Catalyzes the dismutation of two molecules of 6,7-dimethyl-8-ribityllumazine, resulting in the formation of riboflavin and 5-amino-6-(D-ribitylamino)uracil. The polypeptide is Riboflavin synthase (Photobacterium phosphoreum).